Reading from the N-terminus, the 219-residue chain is Protein-methionine-sulfoxide reductase heme-binding subunit MsrQ (219 aa).

5 consecutive transmembrane segments (helical) span residues 17 to 37, 88 to 108, 121 to 141, 153 to 173, and 184 to 204; these read AKPLIFMVCLLPFAWLFYAAW, LFAYFYVVLHLLSYSWFDMGF, PFILVGFSAFVLLTPLAATSF, WQLLHKLVYLIAGLGLLHFFW, and VFVYAAIVALLLGWRVWNHWA.

It belongs to the MsrQ family. In terms of assembly, heterodimer of a catalytic subunit (MsrP) and a heme-binding subunit (MsrQ). FMN serves as cofactor. It depends on heme b as a cofactor.

It localises to the cell inner membrane. Functionally, part of the MsrPQ system that repairs oxidized periplasmic proteins containing methionine sulfoxide residues (Met-O), using respiratory chain electrons. Thus protects these proteins from oxidative-stress damage caused by reactive species of oxygen and chlorine generated by the host defense mechanisms. MsrPQ is essential for the maintenance of envelope integrity under bleach stress, rescuing a wide series of structurally unrelated periplasmic proteins from methionine oxidation. MsrQ provides electrons for reduction to the reductase catalytic subunit MsrP, using the quinone pool of the respiratory chain. The polypeptide is Protein-methionine-sulfoxide reductase heme-binding subunit MsrQ (Polaromonas naphthalenivorans (strain CJ2)).